The sequence spans 70 residues: Large ribosomal subunit protein eL38 (70 aa).

This sequence belongs to the eukaryotic ribosomal protein eL38 family.

The sequence is that of Large ribosomal subunit protein eL38 (rpl-38) from Caenorhabditis elegans.